The following is a 256-amino-acid chain: Receptor expression-enhancing protein 3 (256 aa).

The next 3 helical transmembrane spans lie at 1–21 (MVSWMISRSVVLVFGNLYPAY), 42–62 (WIVFALFTVVETVADLTIAWF), and 68–88 (IKIAFVIWLLSPYTRGASVIY). The tract at residues 177–256 (IMDQPDGAEY…NATTYSNMES (80 aa)) is disordered. Polar residues predominate over residues 247–256 (NATTYSNMES).

It belongs to the DP1 family.

The protein localises to the endoplasmic reticulum membrane. Microtubule-binding protein required to ensure proper cell division and nuclear envelope reassembly by sequestering the endoplasmic reticulum away from chromosomes during mitosis. Probably acts by clearing the endoplasmic reticulum membrane from metaphase chromosomes. In Danio rerio (Zebrafish), this protein is Receptor expression-enhancing protein 3 (reep3).